The chain runs to 91 residues: DNA-directed RNA polymerase subunit omega (91 aa).

Belongs to the RNA polymerase subunit omega family. In terms of assembly, the RNAP catalytic core consists of 2 alpha, 1 beta, 1 beta' and 1 omega subunit. When a sigma factor is associated with the core the holoenzyme is formed, which can initiate transcription.

It catalyses the reaction RNA(n) + a ribonucleoside 5'-triphosphate = RNA(n+1) + diphosphate. In terms of biological role, promotes RNA polymerase assembly. Latches the N- and C-terminal regions of the beta' subunit thereby facilitating its interaction with the beta and alpha subunits. This Shigella flexneri protein is DNA-directed RNA polymerase subunit omega.